A 567-amino-acid chain; its full sequence is uncharacterized protein (567 aa).

Residues 1-26 (MPSEKATTRHLPGAVETLSPRTGRRP) are disordered. A run of 6 helical transmembrane segments spans residues 57–77 (AILV…TVAF), 90–110 (VSFG…TYWL), 142–162 (VALA…IIYG), 173–193 (LFSM…LTEF), 221–241 (MLVW…TAIF), and 257–277 (VLIL…ILAW). An HAMP domain is found at 277–329 (WLTATPVRVVREALNRVEQGDLSGDLVVFDGTELGELQRGFNRMVEGLRERER). The 125-residue stretch at 361–485 (AVVFVDIVGS…EPVNEAARLC (125 aa)) folds into the Guanylate cyclase domain.

Belongs to the adenylyl cyclase class-3 family.

The protein resides in the cell membrane. This is an uncharacterized protein from Mycobacterium bovis (strain ATCC BAA-935 / AF2122/97).